The following is a 67-amino-acid chain: Large ribosomal subunit protein bL35 (67 aa).

Residues 1–20 are disordered; sequence MPKLKTKSGAKKRFVPKKSG.

This sequence belongs to the bacterial ribosomal protein bL35 family.

The protein is Large ribosomal subunit protein bL35 of Anaeromyxobacter dehalogenans (strain 2CP-1 / ATCC BAA-258).